The primary structure comprises 616 residues: Chaperone protein HscA (616 aa).

It belongs to the heat shock protein 70 family.

In terms of biological role, chaperone involved in the maturation of iron-sulfur cluster-containing proteins. Has a low intrinsic ATPase activity which is markedly stimulated by HscB. Involved in the maturation of IscU. This Escherichia coli O7:K1 (strain IAI39 / ExPEC) protein is Chaperone protein HscA.